A 276-amino-acid polypeptide reads, in one-letter code: Diaminopimelate epimerase (276 aa).

Positions 13, 46, and 66 each coordinate substrate. The active-site Proton donor is the Cys75. Substrate-binding positions include 76–77, Asn159, Asn192, and 210–211; these read GN and ER. Cys219 acts as the Proton acceptor in catalysis. Position 220 to 221 (220 to 221) interacts with substrate; that stretch reads GS.

The protein belongs to the diaminopimelate epimerase family. Homodimer.

Its subcellular location is the cytoplasm. The enzyme catalyses (2S,6S)-2,6-diaminopimelate = meso-2,6-diaminopimelate. It participates in amino-acid biosynthesis; L-lysine biosynthesis via DAP pathway; DL-2,6-diaminopimelate from LL-2,6-diaminopimelate: step 1/1. Its function is as follows. Catalyzes the stereoinversion of LL-2,6-diaminopimelate (L,L-DAP) to meso-diaminopimelate (meso-DAP), a precursor of L-lysine and an essential component of the bacterial peptidoglycan. The polypeptide is Diaminopimelate epimerase (Vibrio atlanticus (strain LGP32) (Vibrio splendidus (strain Mel32))).